The following is a 553-amino-acid chain: Putative transport protein YidE (553 aa).

A run of 5 helical transmembrane segments spans residues 4 to 24 (IALTVSVLALVAVVGLWIGNI), 28 to 48 (GVGFGIGGVLFGGIIVGHFVD), 65 to 85 (FGLILFVYTIGIQVGPGFFAS), 95 to 115 (LFAVLIVIMGGLVTAILHKIF), and 158 to 178 (MSYAMAYPFGICGILLTMWLM). RCK C-terminal domains are found at residues 192–276 (KHES…VIGK) and 279–361 (DTSL…VVGN). Helical transmembrane passes span 371–391 (MLPVFIGIGLGVLLGSIPLFV), 403–425 (AGGPLIIALILGRIGSIGKLYWF), 437–457 (LGIVLFLAVVGLKSGGNFVNT), 464–484 (LSWIGYGIFITAIPLITVGLL), and 533–553 (LVMFLRIITPQLLAVIFWGIG).

This sequence belongs to the AAE transporter (TC 2.A.81) family. YidE subfamily.

Its subcellular location is the cell membrane. The polypeptide is Putative transport protein YidE (Salmonella arizonae (strain ATCC BAA-731 / CDC346-86 / RSK2980)).